Consider the following 683-residue polypeptide: Glucosylceramidase (683 aa).

The active-site Proton donor is glutamate 254. Glutamate 483 acts as the Nucleophile in catalysis.

The protein belongs to the glycosyl hydrolase 5 (cellulase A) family.

The protein resides in the membrane. It carries out the reaction a beta-D-glucosyl-(1&lt;-&gt;1')-N-acylsphing-4-enine + H2O = an N-acylsphing-4-enine + D-glucose. With respect to regulation, inhibited by metal cations Co(2+), Cu(2+), Ni(2+), Pb(2+) and Zn(2+). Not inhibited by metal chelator ethylenediaminetetraacetic acid (EDTA). Functionally, specifically hydrolyzes the glucosidic linkage in glucosylceramide. May prevent accumulation of aberrent glucosylceramide containing immature ceramide. This Rhizopus delemar (strain RA 99-880 / ATCC MYA-4621 / FGSC 9543 / NRRL 43880) (Mucormycosis agent) protein is Glucosylceramidase.